Reading from the N-terminus, the 80-residue chain is Exodeoxyribonuclease 7 small subunit (80 aa).

The protein belongs to the XseB family. As to quaternary structure, heterooligomer composed of large and small subunits.

It localises to the cytoplasm. It carries out the reaction Exonucleolytic cleavage in either 5'- to 3'- or 3'- to 5'-direction to yield nucleoside 5'-phosphates.. Bidirectionally degrades single-stranded DNA into large acid-insoluble oligonucleotides, which are then degraded further into small acid-soluble oligonucleotides. The polypeptide is Exodeoxyribonuclease 7 small subunit (Rickettsia conorii (strain ATCC VR-613 / Malish 7)).